The primary structure comprises 354 residues: Rhodopsin (354 aa).

At 1–36 the chain is on the extracellular side; sequence MNGTEGPDFYVPMVNTTGIVRSPYDYPQYYLVNPAA. Asparagine 2 and asparagine 15 each carry an N-linked (GlcNAc...) asparagine glycan. A helical membrane pass occupies residues 37–61; it reads FSMLAAYMFFLILVGFPVNFLTLYV. Topologically, residues 62-73 are cytoplasmic; it reads TMEHKKLRTPLN. The helical transmembrane segment at 74 to 96 threads the bilayer; the sequence is YILLNLAVANLFMVIGGFTTTMY. The Extracellular portion of the chain corresponds to 97-110; that stretch reads TSMHGYFVLGRTGC. The cysteines at positions 110 and 187 are disulfide-linked. A helical transmembrane segment spans residues 111-133; the sequence is NLEGFFATLGGEIALWSLVVLAV. Positions 134–136 match the 'Ionic lock' involved in activated form stabilization motif; the sequence is ERW. Over 134–152 the chain is Cytoplasmic; the sequence is ERWVVVCKPISNFRFGENH. Residues 153 to 173 form a helical membrane-spanning segment; sequence AVMGVSFTWLMACACSVPPLF. Residues 174-202 are Extracellular-facing; that stretch reads GWSRYIPEGMQCSCGIDYYTRAPGYNNES. A helical transmembrane segment spans residues 203-224; it reads FVIYMFVCHFSIPLTIIFFCYG. The Cytoplasmic portion of the chain corresponds to 225–252; sequence RLLCAVKDAAAAQQESETTQRAEREVSR. A helical transmembrane segment spans residues 253-274; that stretch reads MVVIMVIGFLICWLPYASVAWF. At 275 to 286 the chain is on the extracellular side; the sequence is IFTHQGSEFGPV. Residues 287–308 form a helical membrane-spanning segment; it reads FMTIPAFFAKSSAIYNPMIYIC. Lysine 296 carries the N6-(retinylidene)lysine modification. Residues 309–354 lie on the Cytoplasmic side of the membrane; that stretch reads MNKQFRHCMITTLCCGKNPFEEEEGASTTASKTEASSVSSSHVSPA. Residues cysteine 322 and cysteine 323 are each lipidated (S-palmitoyl cysteine). The tract at residues 333 to 354 is disordered; that stretch reads GASTTASKTEASSVSSSHVSPA. Over residues 334–354 the composition is skewed to low complexity; the sequence is ASTTASKTEASSVSSSHVSPA.

Belongs to the G-protein coupled receptor 1 family. Opsin subfamily. Post-translationally, phosphorylated on some or all of the serine and threonine residues present in the C-terminal region. Contains one covalently linked retinal chromophore.

It localises to the membrane. Its subcellular location is the cell projection. It is found in the cilium. The protein resides in the photoreceptor outer segment. Photoreceptor required for image-forming vision at low light intensity. While most salt water fish species use retinal as chromophore, most freshwater fish use 3-dehydroretinal, or a mixture of retinal and 3-dehydroretinal. Light-induced isomerization of 11-cis to all-trans retinal triggers a conformational change that activates signaling via G-proteins. Subsequent receptor phosphorylation mediates displacement of the bound G-protein alpha subunit by arrestin and terminates signaling. The sequence is that of Rhodopsin (rho) from Zeus faber (John Dory).